Consider the following 229-residue polypeptide: 2-C-methyl-D-erythritol 4-phosphate cytidylyltransferase (229 aa).

This sequence belongs to the IspD/TarI cytidylyltransferase family. IspD subfamily.

The catalysed reaction is 2-C-methyl-D-erythritol 4-phosphate + CTP + H(+) = 4-CDP-2-C-methyl-D-erythritol + diphosphate. It participates in isoprenoid biosynthesis; isopentenyl diphosphate biosynthesis via DXP pathway; isopentenyl diphosphate from 1-deoxy-D-xylulose 5-phosphate: step 2/6. Its function is as follows. Catalyzes the formation of 4-diphosphocytidyl-2-C-methyl-D-erythritol from CTP and 2-C-methyl-D-erythritol 4-phosphate (MEP). This Clostridium acetobutylicum (strain ATCC 824 / DSM 792 / JCM 1419 / IAM 19013 / LMG 5710 / NBRC 13948 / NRRL B-527 / VKM B-1787 / 2291 / W) protein is 2-C-methyl-D-erythritol 4-phosphate cytidylyltransferase.